A 112-amino-acid polypeptide reads, in one-letter code: Small ribosomal subunit protein bS6c (112 aa).

Belongs to the bacterial ribosomal protein bS6 family.

Its subcellular location is the plastid. It localises to the chloroplast. Binds together with bS18 to 16S ribosomal RNA. The sequence is that of Small ribosomal subunit protein bS6c (rps6) from Porphyra purpurea (Red seaweed).